The sequence spans 584 residues: Acetylcholinesterase (584 aa).

Residue Ala-1 is a signal peptide. Cys-70 and Cys-97 are joined by a disulfide. Ser-204 acts as the Acyl-ester intermediate in catalysis. Residues Cys-258 and Cys-273 are joined by a disulfide bond. Residue Asn-266 is glycosylated (N-linked (GlcNAc...) asparagine). Glu-335 (charge relay system) is an active-site residue. An N-linked (GlcNAc...) asparagine glycan is attached at Asn-351. Cys-410 and Cys-530 are joined by a disulfide. The Charge relay system role is filled by His-448. A glycan (N-linked (GlcNAc...) asparagine) is linked at Asn-465.

Belongs to the type-B carboxylesterase/lipase family. As to quaternary structure, homotetramer; composed of disulfide-linked homodimers. Interacts with PRIMA1. The interaction with PRIMA1 is required to anchor it to the basal lamina of cells and organize into tetramers.

The protein localises to the synapse. The protein resides in the secreted. It is found in the cell membrane. The catalysed reaction is acetylcholine + H2O = choline + acetate + H(+). Functionally, terminates signal transduction at the neuromuscular junction by rapid hydrolysis of the acetylcholine released into the synaptic cleft. This is Acetylcholinesterase (ACHE) from Oryctolagus cuniculus (Rabbit).